A 215-amino-acid polypeptide reads, in one-letter code: Orotidine 5'-phosphate decarboxylase (215 aa).

Residues Asp12, Lys34, 60-69 (DFKVADIPNT), Ser117, 170-180 (PGVGAQGGSAA), Gly193, and Arg194 contribute to the substrate site. Lys62 serves as the catalytic Proton donor.

The protein belongs to the OMP decarboxylase family. Type 1 subfamily. In terms of assembly, homodimer.

The enzyme catalyses orotidine 5'-phosphate + H(+) = UMP + CO2. It functions in the pathway pyrimidine metabolism; UMP biosynthesis via de novo pathway; UMP from orotate: step 2/2. Catalyzes the decarboxylation of orotidine 5'-monophosphate (OMP) to uridine 5'-monophosphate (UMP). In Methanococcoides burtonii (strain DSM 6242 / NBRC 107633 / OCM 468 / ACE-M), this protein is Orotidine 5'-phosphate decarboxylase.